Reading from the N-terminus, the 92-residue chain is Small ribosomal subunit protein bS18 (92 aa).

This sequence belongs to the bacterial ribosomal protein bS18 family. In terms of assembly, part of the 30S ribosomal subunit. Forms a tight heterodimer with protein bS6.

Binds as a heterodimer with protein bS6 to the central domain of the 16S rRNA, where it helps stabilize the platform of the 30S subunit. The sequence is that of Small ribosomal subunit protein bS18 from Pelagibacter ubique (strain HTCC1062).